The sequence spans 441 residues: Methylenetetrahydrofolate--tRNA-(uracil-5-)-methyltransferase TrmFO (441 aa).

FAD is bound at residue G7–G12.

It belongs to the MnmG family. TrmFO subfamily. It depends on FAD as a cofactor.

Its subcellular location is the cytoplasm. It catalyses the reaction uridine(54) in tRNA + (6R)-5,10-methylene-5,6,7,8-tetrahydrofolate + NADH + H(+) = 5-methyluridine(54) in tRNA + (6S)-5,6,7,8-tetrahydrofolate + NAD(+). The enzyme catalyses uridine(54) in tRNA + (6R)-5,10-methylene-5,6,7,8-tetrahydrofolate + NADPH + H(+) = 5-methyluridine(54) in tRNA + (6S)-5,6,7,8-tetrahydrofolate + NADP(+). Catalyzes the folate-dependent formation of 5-methyl-uridine at position 54 (M-5-U54) in all tRNAs. The protein is Methylenetetrahydrofolate--tRNA-(uracil-5-)-methyltransferase TrmFO of Pseudothermotoga lettingae (strain ATCC BAA-301 / DSM 14385 / NBRC 107922 / TMO) (Thermotoga lettingae).